Reading from the N-terminus, the 147-residue chain is Hemoglobin subunit epsilon (147 aa).

Positions 3-147 constitute a Globin domain; it reads HLTAEEKAAI…VAIALGHKYH (145 aa). Phosphoserine is present on residues Ser14 and Ser51. Heme b contacts are provided by His64 and His93.

It belongs to the globin family. Heterotetramer of two alpha chains and two epsilon chains in early embryonic hemoglobin Gower-2; two zeta chains and two epsilon chains in early embryonic hemoglobin Gower-1. As to expression, red blood cells.

Its function is as follows. The epsilon chain is a beta-type chain of early mammalian embryonic hemoglobin. This is Hemoglobin subunit epsilon (HBE1) from Ateles belzebuth (White-bellied spider monkey).